Here is a 273-residue protein sequence, read N- to C-terminus: Dermonecrotic toxin LapSicTox-alphaII1 (273 aa).

His5 is a catalytic residue. Residues Glu25 and Asp27 each contribute to the Mg(2+) site. Catalysis depends on His41, which acts as the Nucleophile. Disulfide bonds link Cys45/Cys51 and Cys47/Cys191. Asp85 serves as a coordination point for Mg(2+).

Belongs to the arthropod phospholipase D family. Class II subfamily. It depends on Mg(2+) as a cofactor. Expressed by the venom gland.

It is found in the secreted. The catalysed reaction is an N-(acyl)-sphingosylphosphocholine = an N-(acyl)-sphingosyl-1,3-cyclic phosphate + choline. It catalyses the reaction an N-(acyl)-sphingosylphosphoethanolamine = an N-(acyl)-sphingosyl-1,3-cyclic phosphate + ethanolamine. The enzyme catalyses a 1-acyl-sn-glycero-3-phosphocholine = a 1-acyl-sn-glycero-2,3-cyclic phosphate + choline. It carries out the reaction a 1-acyl-sn-glycero-3-phosphoethanolamine = a 1-acyl-sn-glycero-2,3-cyclic phosphate + ethanolamine. Its function is as follows. Dermonecrotic toxins cleave the phosphodiester linkage between the phosphate and headgroup of certain phospholipids (sphingolipid and lysolipid substrates), forming an alcohol (often choline) and a cyclic phosphate. This toxin acts on sphingomyelin (SM). It may also act on ceramide phosphoethanolamine (CPE), lysophosphatidylcholine (LPC) and lysophosphatidylethanolamine (LPE), but not on lysophosphatidylserine (LPS), and lysophosphatidylglycerol (LPG). It acts by transphosphatidylation, releasing exclusively cyclic phosphate products as second products. Induces dermonecrosis, hemolysis, increased vascular permeability, edema, inflammatory response, and platelet aggregation. The protein is Dermonecrotic toxin LapSicTox-alphaII1 of Loxosceles apachea (Apache recluse spider).